Consider the following 260-residue polypeptide: Cytochrome c oxidase subunit 2 (260 aa).

Residues 1-41 (MIVLKWLFFTISPCDAAEPWQLGFQDAATPIMQGIIDLHHD) are Mitochondrial intermembrane-facing. Residues 42–62 (IFFFLILILVFVLWILVRALW) traverse the membrane as a helical segment. At 63 to 86 (HFHYKKNAIPQRIVHGTTIEILWT) the chain is on the mitochondrial matrix side. Residues 87–107 (IFPSIILMFIAIPSFALLYSM) traverse the membrane as a helical segment. Over 108-260 (DEVVVDPAIT…NQLIPQTGEA (153 aa)) the chain is Mitochondrial intermembrane. His187, Cys222, Glu224, Cys226, His230, and Met233 together coordinate Cu cation. Residue Glu224 coordinates Mg(2+).

Belongs to the cytochrome c oxidase subunit 2 family. As to quaternary structure, component of the cytochrome c oxidase (complex IV, CIV), a multisubunit enzyme composed of a catalytic core of 3 subunits and several supernumerary subunits. The complex exists as a monomer or a dimer and forms supercomplexes (SCs) in the inner mitochondrial membrane with ubiquinol-cytochrome c oxidoreductase (cytochrome b-c1 complex, complex III, CIII). The cofactor is Cu cation.

The protein resides in the mitochondrion inner membrane. The catalysed reaction is 4 Fe(II)-[cytochrome c] + O2 + 8 H(+)(in) = 4 Fe(III)-[cytochrome c] + 2 H2O + 4 H(+)(out). Its function is as follows. Component of the cytochrome c oxidase, the last enzyme in the mitochondrial electron transport chain which drives oxidative phosphorylation. The respiratory chain contains 3 multisubunit complexes succinate dehydrogenase (complex II, CII), ubiquinol-cytochrome c oxidoreductase (cytochrome b-c1 complex, complex III, CIII) and cytochrome c oxidase (complex IV, CIV), that cooperate to transfer electrons derived from NADH and succinate to molecular oxygen, creating an electrochemical gradient over the inner membrane that drives transmembrane transport and the ATP synthase. Cytochrome c oxidase is the component of the respiratory chain that catalyzes the reduction of oxygen to water. Electrons originating from reduced cytochrome c in the intermembrane space (IMS) are transferred via the dinuclear copper A center (CU(A)) of subunit 2 and heme A of subunit 1 to the active site in subunit 1, a binuclear center (BNC) formed by heme A3 and copper B (CU(B)). The BNC reduces molecular oxygen to 2 water molecules using 4 electrons from cytochrome c in the IMS and 4 protons from the mitochondrial matrix. In Arabidopsis thaliana (Mouse-ear cress), this protein is Cytochrome c oxidase subunit 2 (COX2).